The chain runs to 286 residues: Aquaporin PIP1-1 (286 aa).

Met-1 carries the post-translational modification N-acetylmethionine. The tract at residues 1 to 34 is disordered; that stretch reads MEGKEEDVRVGANKFPERQPIGTSAQSDKDYKEP. The Cytoplasmic segment spans residues 1–54; sequence MEGKEEDVRVGANKFPERQPIGTSAQSDKDYKEPPPAPFFEPGELSSWSFWRAG. A helical transmembrane segment spans residues 55 to 75; that stretch reads IAEFIATFLFLYITVLTVMGV. The Extracellular portion of the chain corresponds to 76-91; sequence KRSPNMCASVGIQGIA. Residues 92-112 form a helical membrane-spanning segment; it reads WAFGGMIFALVYCTAGISGGH. At 113-132 the chain is on the cytoplasmic side; it reads INPAVTFGLFLARKLSLTRA. The short motif at 114-116 is the NPA 1 element; it reads NPA. A helical membrane pass occupies residues 133–153; sequence LYYIVMQCLGAICGAGVVKGF. At 154-174 the chain is on the extracellular side; the sequence is QPKQYQALGGGANTVAHGYTK. The chain crosses the membrane as a helical span at residues 175–195; it reads GSGLGAEIIGTFVLVYTVFSA. Residues 196–208 lie on the Cytoplasmic side of the membrane; it reads TDAKRNARDSHVP. Residues 209-229 traverse the membrane as a helical segment; that stretch reads ILAPLPIGFAVFLVHLATIPI. The Extracellular portion of the chain corresponds to 230–256; it reads TGTGINPARSLGAAIIYNKDHSWDDHW. Residues 235-237 carry the NPA 2 motif; that stretch reads NPA. Residues 257–277 traverse the membrane as a helical segment; it reads VFWVGPFIGAALAALYHVVVI. Over 278–286 the chain is Cytoplasmic; the sequence is RAIPFKSRS. Ser-284 is subject to Phosphoserine.

Belongs to the MIP/aquaporin (TC 1.A.8) family. PIP (TC 1.A.8.11) subfamily. Widely expressed. Expressed in roots, above ground and in flower buds.

It is found in the cell membrane. Water channel required to facilitate the transport of water across cell membrane. Its function is impaired by Hg(2+). The protein is Aquaporin PIP1-1 (PIP1-1) of Arabidopsis thaliana (Mouse-ear cress).